Consider the following 1039-residue polypeptide: MAVQLVPDSALGLLMMTEGRRCQVHLLDDRKLELLVQPKLLAKELLDLVASHFNLKEKEYFGIAFTDETGHLNWLQLDRRVLEHDFPKKSGPVVLYFCVRFYIESISYLKDNATIELFFLNAKSCIYKELIDVDSEVVFELASYILQEAKGDFSSNEVVRSDLKKLPALPTQALKEHPSLAYCEDRVIEHYKKLNGQTRGQAIVNYMSIVESLPTYGVHYYAVKDKQGIPWWLGLSYKGIFQYDYHDKVKPRKIFQWRQLENLYFREKKFSVEVHDPRRASVTRRTFGHSGIAVHTWYACPALIKSIWAMAISQHQFYLDRKQSKSKIHAARSLSEIAIDLTETGTLKTSKLANMGSKGKIISGSSGSLLSSGSQESDSSQSAKKDMLAALKSRQEALEETLRQRLEELKKLCLREAELTGKLPVEYPLDPGEEPPIVRRRIGTAFKLDEQKILPKGEEAELERLEREFAIQSQITEAARRLASDPNVSKKLKKQRKTSYLNALKKLQEIENAINENRIKSGKKPTQRASLIIDDGNIASEDSSLSDALVLEDEDSQVTSTISPLHSPHKGLPPRPPSHNRPPPPQSLEGLRQMHYHRNDYDKSPIKPKMWSESSLDEPYEKVKKRSSHSHSSSHKRFPSTGSCAEAGGGSNSLQNSPIRGLPHWNSQSSMPSTPDLRVRSPHYVHSTRSVDISPTRLHSLALHFRHRSSSLESQGKLLGSENDTGSPDFYTPRTRSSNGSDPMDDCSSCTSHSSSEHYYPAQMNANYSTLAEDSPSKARQRQRQRQRAAGALGSASSGSMPNLAARGGAGGAGGAGGGVYLHSQSQPSSQYRIKEYPLYIEGGATPVVVRSLESDQEGHYSVKAQFKTSNSYTAGGLFKESWRGGGGDEGDTGRLTPSRSQILRTPSLGREGAHDKGAGRAAVSDELRQWYQRSTASHKEHSRLSHTSSTSSDSGSQYSTSSQSTFVAHSRVTRMPQMCKATSAALPQSQRSSTPSSEIGATPPSSPHHILTWQTGEATENSPILDGSESPPHQSTDE.

An FERM domain is found at 20–322 (RRCQVHLLDD…SQHQFYLDRK (303 aa)). The tract at residues 358-420 (KGKIISGSSG…KLCLREAELT (63 aa)) is necessary for interaction with CYTH1. Residues 366–382 (SGSLLSSGSQESDSSQS) show a composition bias toward low complexity. The disordered stretch occupies residues 366-386 (SGSLLSSGSQESDSSQSAKKD). A coiled-coil region spans residues 382-416 (SAKKDMLAALKSRQEALEETLRQRLEELKKLCLRE). Serine 530 carries the phosphoserine modification. Positions 553–680 (DEDSQVTSTI…MPSTPDLRVR (128 aa)) are disordered. The span at 571–586 (GLPPRPPSHNRPPPPQ) shows a compositional bias: pro residues. The interval 579 to 939 (HNRPPPPQSL…QWYQRSTASH (361 aa)) is necessary for tight junction and adherens junction localization; Requires for interaction with PARD3. A phosphoserine mark is found at serine 604 and serine 615. Residues 623–638 (VKKRSSHSHSSSHKRF) are compositionally biased toward basic residues. 2 positions are modified to phosphoserine: serine 681 and serine 711. 2 disordered regions span residues 713–756 (ESQG…HSSS) and 772–813 (AEDS…AGGA). The span at 788 to 800 (RAAGALGSASSGS) shows a compositional bias: low complexity. Phosphoserine is present on residues serine 800, serine 872, and serine 901. Disordered stretches follow at residues 879–968 (FKES…STFV) and 980–1039 (CKAT…STDE). Positions 896–905 (LTPSRSQILR) are enriched in polar residues. Residues 912–929 (EGAHDKGAGRAAVSDELR) are compositionally biased toward basic and acidic residues. Positions 946-966 (SHTSSTSSDSGSQYSTSSQST) are enriched in low complexity. Polar residues-rich tracts occupy residues 986 to 1000 (ALPQ…SSEI) and 1013 to 1023 (TWQTGEATENS).

In terms of assembly, interacts (via coiled-coil domain) with CYTH1 (via coiled-coil domain). Interacts with PARD3 (via coiled-coil domain). Found in a complex with PARD3, CYTH1 and FRMD4A. Interacts with CYTH2. Interacts with CYTH3.

Its subcellular location is the cytoplasm. It is found in the cytoskeleton. The protein localises to the cell junction. The protein resides in the adherens junction. It localises to the tight junction. Scaffolding protein that regulates epithelial cell polarity by connecting ARF6 activation with the PAR3 complex. Plays a redundant role with FRMD4B in epithelial polarization. May regulate MAPT secretion by activating ARF6-signaling. The sequence is that of FERM domain-containing protein 4A from Homo sapiens (Human).